Reading from the N-terminus, the 596-residue chain is Leucine zipper putative tumor suppressor 1 (596 aa).

G2 carries N-myristoyl glycine lipidation. Disordered stretches follow at residues 136 to 193 and 295 to 324; these read AILH…SYQL and YEER…SQKS. A compositionally biased stretch (basic and acidic residues) spans 153–162; the sequence is PPDKPKEQEL. Positions 178–190 are enriched in low complexity; it reads SMSSLPTHSTSSS. The stretch at 256–374 forms a coiled coil; that stretch reads ISTDECSIQE…SYEREKTSFG (119 aa). Residues 295 to 310 are compositionally biased toward basic and acidic residues; the sequence is YEERPRRCRDELEGPE.

This sequence belongs to the LZTS family. As to quaternary structure, binds EEF1G, TLK2 and CDK1. Phosphorylated on serine residues. Hyperphosphorylated by the cAMP-dependent kinase PKA during cell-cycle progression. In terms of tissue distribution, highly expressed in testis, prostate, spleen, thymus, ovary and brain. Detected at lower levels in heart, placenta, small intestine, colon, liver, kidney, skeletal muscle and pancreas. Not detectable in primary tumors from breast and prostate and in many cancer cell lines.

Its subcellular location is the cytoplasm. The protein resides in the cell membrane. The protein localises to the cell projection. It localises to the dendritic spine. It is found in the postsynaptic density. Its subcellular location is the synapse. Functionally, involved in the regulation of cell growth. May stabilize the active CDC2-cyclin B1 complex and thereby contribute to the regulation of the cell cycle and the prevention of uncontrolled cell proliferation. May act as a tumor suppressor. This chain is Leucine zipper putative tumor suppressor 1 (LZTS1), found in Homo sapiens (Human).